The sequence spans 345 residues: MSKRGTRTPGYWYDNTPIPLPARILAPVYGAAIALRRALYRRGWRRRHGVPVPVIVVGNVTAGGTGKTPLTIALVAKLQEAGWTPGVASRGYGRDDAGTARWVEADTPVALGGDEPVLIAWKTGARVRVDSDRLAAARALVEAGCDIVICDDGLQHYRLARDVEIEVVDGQRRYGNGRLLPAGPLREPAARAQDCDFRVVNLGQASATATPQAPDDAGFGKWQMRLSIDSVQPMDGKRAQPLSMLAGQRVHAVAGIAHPERFFAMLRARGIGVVPHAFADHHVYRAADFSFGSRLPVLMTEKDAVKCRPFADEWLYSVPLKAELPAAFWVSLLDRLNKLASRQGV.

Residue T61–T68 coordinates ATP.

It belongs to the LpxK family.

It catalyses the reaction a lipid A disaccharide + ATP = a lipid IVA + ADP + H(+). Its pathway is glycolipid biosynthesis; lipid IV(A) biosynthesis; lipid IV(A) from (3R)-3-hydroxytetradecanoyl-[acyl-carrier-protein] and UDP-N-acetyl-alpha-D-glucosamine: step 6/6. Transfers the gamma-phosphate of ATP to the 4'-position of a tetraacyldisaccharide 1-phosphate intermediate (termed DS-1-P) to form tetraacyldisaccharide 1,4'-bis-phosphate (lipid IVA). The sequence is that of Tetraacyldisaccharide 4'-kinase from Xanthomonas axonopodis pv. citri (strain 306).